We begin with the raw amino-acid sequence, 318 residues long: MPIAMGLETACELECAALGALLREPREAERTLLLDCRPFLAFCRSHVRAARPVPWNALLRRRARGTPAAALACLLPDRALRARLGRGELARAVVLDESSASVAELPPDGPAHLLLAALQHEMRGGPTTVCFLRGGFKSFQTYCPDLCSEAPAQALPPAGAENSNSDPRVPIYDQGGPVEILPYLYLGSCNHSSDLQGLQACGITAVLNVSASCPNHFEGLFHYKSIPVEDNQMVEISAWFQEAISFIDSVKNSGGRVLVHCQAGISRSATICLAYLIQSHRVRLDEAFDFVKQRRGVISPNFSFMGQLLQLETQVLCH.

The 122-residue stretch at 27 to 148 folds into the Rhodanese domain; sequence EAERTLLLDC…FQTYCPDLCS (122 aa). The 142-residue stretch at 176–317 folds into the Tyrosine-protein phosphatase domain; the sequence is GPVEILPYLY…LLQLETQVLC (142 aa). Cys-261 functions as the Phosphocysteine intermediate in the catalytic mechanism.

The protein belongs to the protein-tyrosine phosphatase family. Non-receptor class dual specificity subfamily. In terms of assembly, interacts with MAPK14; this interaction does not lead to catalytic activation of DUSP2 and dephosphrylation of MAPK14. In hematopoietic tissues such as spleen and thymus.

It localises to the nucleus. It catalyses the reaction O-phospho-L-tyrosyl-[protein] + H2O = L-tyrosyl-[protein] + phosphate. The catalysed reaction is O-phospho-L-threonyl-[protein] + H2O = L-threonyl-[protein] + phosphate. Its function is as follows. Dephosphorylates both phosphorylated Thr and Tyr residues in MAPK1, and dephosphorylation of phosphotyrosine is slightly faster than that of phosphothreonine. Can dephosphorylate MAPK1. The chain is Dual specificity protein phosphatase 2 from Mus musculus (Mouse).